Reading from the N-terminus, the 1405-residue chain is Tonsoku-like protein (1405 aa).

TPR repeat units follow at residues 23–56 (AVSCNQLGDFYNQQGKYTDAVREYVQEAQIYASM), 63–96 (AKAKRMVGEMYTLLCDYDAAKDHINDYLKIAKRL), 163–196 (ARCYLNIGVVKEHMEAFQESIEYIDKAIKISKTH), 203–237 (HLCYISMSLLYICKKNDATAALRFCNMALEVAKRF), 245–278 (CETLITKAEILIKAGDFASAKQILTKAYKKNTPD), 314–347 (KGLYEKLGDGCCHLMNYEKALTYYQKMLENAELN), and 355–388 (VPIYVSLYQTYRDNGQFDKALEYLWKEFELNQDA). The stretch at 153–181 (ISKLEQLDMQARCYLNIGVVKEHMEAFQE) is one LRR 1 repeat. One copy of the LRR 2 repeat lies at 439–465 (MVRLRRLMLKHNMQVLVENLEADATAK). The segment at 465–535 (KGIDLDQEES…RGNRTLVIKK (71 aa)) is disordered. Over residues 469–483 (LDQEESVGDDEEESD) the composition is skewed to acidic residues. 3 ANK repeats span residues 538–567 (KGETQLHQACISGNLELVRRLIDQGHTVNV), 571–600 (AGWLPLHEACNHGYREIVELLLDKGAASAI), and 609–638 (DGITPLFDACSNGFLDVAELLLDRGADATV). 3 disordered regions span residues 695–753 (FNAK…KEYR), 806–827 (KRINSGDLSRRTSKENFQDTAL), and 841–880 (TPENEYSQRQKQMRKLTLSRSSSMSSNHSSSATSSRKKHQ). Serine 707 and serine 709 each carry phosphoserine. The span at 813 to 822 (LSRRTSKENF) shows a compositional bias: basic and acidic residues. Residues 841-850 (TPENEYSQRQ) are compositionally biased toward polar residues. Positions 859-874 (SRSSSMSSNHSSSATS) are enriched in low complexity. Serine 893, serine 895, serine 899, and serine 902 each carry phosphoserine. LRR repeat units lie at residues 1085–1108 (QARLTVLDLSCNFIGNEGCQQLAK), 1113–1137 (LLQLKALRLQCNAIGSHGLEALLCG), 1143–1166 (LELLEELNLNQNPLGNASVRILSK), 1186–1211 (LTELQDFDLGFNKLTRFDISFNQLTQ), 1287–1311 (AKQLQMLDISDNSNLSGTTLGYILD), and 1333–1357 (LQKLEQLKQLPRRLELTVDEQVFSM).

The protein belongs to the Tonsoku family.

It localises to the nucleus. Its subcellular location is the nucleoplasm. It is found in the chromosome. Functionally, histone reader involved in homologous recombination-mediated repair of double-strand breaks (DSBs) at stalled or collapsed replication forks. Specifically recognizes and binds histone H3.1. The chain is Tonsoku-like protein from Drosophila melanogaster (Fruit fly).